A 388-amino-acid polypeptide reads, in one-letter code: Lipid-A-disaccharide synthase (388 aa).

Belongs to the LpxB family.

The catalysed reaction is a lipid X + a UDP-2-N,3-O-bis[(3R)-3-hydroxyacyl]-alpha-D-glucosamine = a lipid A disaccharide + UDP + H(+). It participates in bacterial outer membrane biogenesis; LPS lipid A biosynthesis. Condensation of UDP-2,3-diacylglucosamine and 2,3-diacylglucosamine-1-phosphate to form lipid A disaccharide, a precursor of lipid A, a phosphorylated glycolipid that anchors the lipopolysaccharide to the outer membrane of the cell. This is Lipid-A-disaccharide synthase from Burkholderia mallei (strain ATCC 23344).